The primary structure comprises 586 residues: Ezrin (586 aa).

In terms of domain architecture, FERM spans P2–K296. Residue K60 is modified to N6-acetyllysine. A [IL]-x-C-x-x-[DE] motif motif is present at residues I115–E120. At Y146 the chain carries Phosphotyrosine; by PDGFR. Residues E244–L586 are interaction with SCYL3. A coiled-coil region spans residues V302–E462. Residues K306–M341 are disordered. The segment covering Q308–M341 has biased composition (basic and acidic residues). At Y354 the chain carries Phosphotyrosine; by PDGFR. S366 is modified (phosphoserine). The residue at position 478 (Y478) is a Phosphotyrosine. The interval V485–K564 is disordered. The span at G507–Q528 shows a compositional bias: basic and acidic residues. Positions Q530–S539 are enriched in polar residues. A Phosphoserine modification is found at S535. The segment covering Q540 to K564 has biased composition (basic and acidic residues). Residue T567 is modified to Phosphothreonine; by ROCK2 and PKC/PRKCI.

As to quaternary structure, monomer. Homodimer. Interacts with PALS1 and NHERF2. Found in a complex with EZR, PODXL and NHERF2. Interacts with MCC, PLEKHG6, PODXL, SCYL3/PACE1, NHERF1 and TMEM8B. Interacts (when phosphorylated) with FES/FPS. Interacts with dimeric S100P, the interaction may be activating through unmasking of F-actin binding sites. Identified in complexes that contain VIM, EZR, AHNAK, BFSP1, BFSP2, ANK2, PLEC, PRX and spectrin. Detected in a complex composed of at least EZR, AHNAK, PPL and PRX. Interacts with PDPN (via cytoplasmic domain); activates RHOA and promotes epithelial-mesenchymal transition. Interacts with SPN/CD43 cytoplasmic tail, CD44 and ICAM2. Interacts with SLC9A3; interaction targets SLC9A3 to the apical membrane. Interacts with SLC9A1; regulates interactions of SLC9A1 with cytoskeletal and promotes stress fiber formation. Interacts with CLIC5; may work together in a complex which also includes RDX and MYO6 to stabilize linkages between the plasma membrane and subjacent actin cytoskeleton at the base of stereocilia. In terms of processing, phosphorylated by tyrosine-protein kinases. Phosphorylation by ROCK2 suppresses the head-to-tail association of the N-terminal and C-terminal halves resulting in an opened conformation which is capable of actin and membrane-binding. S-nitrosylation is induced by interferon-gamma and oxidatively-modified low-densitity lipoprotein (LDL(ox)) possibly implicating the iNOS-S100A8/9 transnitrosylase complex. In terms of tissue distribution, expressed in cerebral cortex, basal ganglia, hippocampus, hypophysis, and optic nerve. Weakly expressed in brain stem and diencephalon. Stronger expression was detected in gray matter of frontal lobe compared to white matter (at protein level). Component of the microvilli of intestinal epithelial cells. Preferentially expressed in astrocytes of hippocampus, frontal cortex, thalamus, parahippocampal cortex, amygdala, insula, and corpus callosum. Not detected in neurons in most tissues studied.

The protein localises to the apical cell membrane. The protein resides in the cell projection. It is found in the microvillus membrane. It localises to the ruffle membrane. Its subcellular location is the cytoplasm. The protein localises to the cell cortex. The protein resides in the cytoskeleton. It is found in the microvillus. Its activity is regulated as follows. A head-to-tail association, of the N-terminal and C-terminal halves results in a closed conformation (inactive form) which is incapable of actin or membrane-binding. Its function is as follows. Probably involved in connections of major cytoskeletal structures to the plasma membrane. In epithelial cells, required for the formation of microvilli and membrane ruffles on the apical pole. Along with PLEKHG6, required for normal macropinocytosis. The polypeptide is Ezrin (EZR) (Homo sapiens (Human)).